The sequence spans 1263 residues: Valine--tRNA ligase (1263 aa).

S2 carries the N-acetylserine modification. In terms of domain architecture, GST C-terminal spans 89 to 219 (GSRAAVLVQQ…YSGARSVTQQ (131 aa)). Positions 218–294 (QQPGSEVIAP…PGEKKDVSGA (77 aa)) are disordered. Basic and acidic residues-rich tracts occupy residues 234 to 248 (LKKEAKKREKLEKFQ) and 259 to 274 (HGEKKPKPEKKEKRDP). A 'HIGH' region motif is present at residues 343-353 (PNVTGSLHLGH). Residues S436 and S526 each carry the phosphoserine modification. K644 bears the N6-acetyllysine mark. Residues 861-865 (KMSKS) carry the 'KMSKS' region motif. Residue K864 coordinates ATP.

Belongs to the class-I aminoacyl-tRNA synthetase family. Forms high-molecular-mass aggregates with elongation factor 1.

It catalyses the reaction tRNA(Val) + L-valine + ATP = L-valyl-tRNA(Val) + AMP + diphosphate. Can be regulated by protein kinase C-dependent phosphorylation. In Mus musculus (Mouse), this protein is Valine--tRNA ligase (Vars1).